A 258-amino-acid chain; its full sequence is Acetylglutamate kinase (258 aa).

Residues 44–45, Arg-66, and Asn-158 contribute to the substrate site; that span reads GG. ATP is bound by residues 181-186 and 209-211; these read DVSGIL and IIT.

Belongs to the acetylglutamate kinase family. ArgB subfamily. Homodimer.

The protein resides in the cytoplasm. The enzyme catalyses N-acetyl-L-glutamate + ATP = N-acetyl-L-glutamyl 5-phosphate + ADP. It functions in the pathway amino-acid biosynthesis; L-arginine biosynthesis; N(2)-acetyl-L-ornithine from L-glutamate: step 2/4. In terms of biological role, catalyzes the ATP-dependent phosphorylation of N-acetyl-L-glutamate. This is Acetylglutamate kinase from Shigella flexneri serotype 5b (strain 8401).